We begin with the raw amino-acid sequence, 692 residues long: Proprotein convertase subtilisin/kexin type 9 (692 aa).

The N-terminal stretch at 1-30 (MGTVSSRRSWWPLPLPLLLLLLLGPAGARA) is a signal peptide. A propeptide spanning residues 31 to 152 (QEDEDGDYEE…IEEDSSVFAQ (122 aa)) is cleaved from the precursor. At Tyr-38 the chain carries Sulfotyrosine. Residue Ser-47 is modified to Phosphoserine. The region spanning 77–149 (TYVVVLKEET…VDYIEEDSSV (73 aa)) is the Inhibitor I9 domain. The Peptidase S8 domain occupies 155–444 (PWNLERITPA…VLTPNLVAAL (290 aa)). Active-site charge relay system residues include Asp-186 and His-226. Cystine bridges form between Cys-223–Cys-255 and Cys-323–Cys-358. The active-site Charge relay system is the Ser-386. The interval 450–692 (RAGWQLFCRT…HLVQASQELQ (243 aa)) is C-terminal domain. 3 disulfides stabilise this stretch: Cys-457-Cys-527, Cys-477-Cys-526, and Cys-486-Cys-509. N-linked (GlcNAc...) asparagine glycosylation occurs at Asn-533. 6 disulfides stabilise this stretch: Cys-534–Cys-601, Cys-552–Cys-600, Cys-562–Cys-588, Cys-608–Cys-679, Cys-626–Cys-678, and Cys-635–Cys-654. Ser-688 bears the Phosphoserine mark.

It belongs to the peptidase S8 family. In terms of assembly, monomer. Can self-associate to form dimers and higher multimers which may have increased LDLR degrading activity. The precursor protein but not the mature protein may form multimers. Interacts with APOB, VLDLR, LRP8/APOER2 and BACE1. The full-length immature form (pro-PCSK9) interacts with SCNN1A, SCNN1B and SCNN1G. The pro-PCSK9 form (via C-terminal domain) interacts with LDLR. Interacts (via the C-terminal domain) with ANXA2 (via repeat Annexin 1); the interaction inhibits the degradation of LDLR. It depends on Ca(2+) as a cofactor. Post-translationally, cleavage by furin and PCSK5 generates a truncated inactive protein that is unable to induce LDLR degradation. In terms of processing, undergoes autocatalytic cleavage in the endoplasmic reticulum to release the propeptide from the N-terminus and the cleavage of the propeptide is strictly required for its maturation and activation. The cleaved propeptide however remains associated with the catalytic domain through non-covalent interactions, preventing potential substrates from accessing its active site. As a result, it is secreted from cells as a propeptide-containing, enzymatically inactive protein. Phosphorylation protects the propeptide against proteolysis.

The protein resides in the cytoplasm. Its subcellular location is the secreted. It is found in the endosome. The protein localises to the lysosome. It localises to the cell surface. The protein resides in the endoplasmic reticulum. Its subcellular location is the golgi apparatus. Its activity is regulated as follows. Its proteolytic activity is autoinhibited by the non-covalent binding of the propeptide to the catalytic domain. Inhibited by EGTA. Its function is as follows. Crucial player in the regulation of plasma cholesterol homeostasis. Binds to low-density lipid receptor family members: low density lipoprotein receptor (LDLR), very low density lipoprotein receptor (VLDLR), apolipoprotein E receptor (LRP1/APOER) and apolipoprotein receptor 2 (LRP8/APOER2), and promotes their degradation in intracellular acidic compartments. Acts via a non-proteolytic mechanism to enhance the degradation of the hepatic LDLR through a clathrin LDLRAP1/ARH-mediated pathway. May prevent the recycling of LDLR from endosomes to the cell surface or direct it to lysosomes for degradation. Can induce ubiquitination of LDLR leading to its subsequent degradation. Inhibits intracellular degradation of APOB via the autophagosome/lysosome pathway in a LDLR-independent manner. Involved in the disposal of non-acetylated intermediates of BACE1 in the early secretory pathway. Inhibits epithelial Na(+) channel (ENaC)-mediated Na(+) absorption by reducing ENaC surface expression primarily by increasing its proteasomal degradation. Regulates neuronal apoptosis via modulation of LRP8/APOER2 levels and related anti-apoptotic signaling pathways. The sequence is that of Proprotein convertase subtilisin/kexin type 9 (PCSK9) from Macaca mulatta (Rhesus macaque).